Reading from the N-terminus, the 248-residue chain is Triosephosphate isomerase (248 aa).

Asparagine 9–lysine 11 contributes to the substrate binding site. Histidine 95 serves as the catalytic Electrophile. Glutamate 166 (proton acceptor) is an active-site residue. Substrate contacts are provided by residues glycine 172, serine 210, and glycine 231–glycine 232.

The protein belongs to the triosephosphate isomerase family. Homodimer.

The protein localises to the cytoplasm. It carries out the reaction D-glyceraldehyde 3-phosphate = dihydroxyacetone phosphate. It participates in carbohydrate biosynthesis; gluconeogenesis. The protein operates within carbohydrate degradation; glycolysis; D-glyceraldehyde 3-phosphate from glycerone phosphate: step 1/1. Its function is as follows. Involved in the gluconeogenesis. Catalyzes stereospecifically the conversion of dihydroxyacetone phosphate (DHAP) to D-glyceraldehyde-3-phosphate (G3P). This chain is Triosephosphate isomerase, found in Delftia acidovorans (strain DSM 14801 / SPH-1).